A 347-amino-acid chain; its full sequence is Glutamyl-Q tRNA(Asp) synthetase (347 aa).

L-glutamate-binding positions include 31 to 35 (RFAPS) and glutamate 67. Positions 34–44 (PSPTSALHLGN) match the 'HIGH' region motif. Zn(2+) contacts are provided by cysteine 121, cysteine 123, tyrosine 143, and cysteine 147. L-glutamate-binding residues include tyrosine 203 and arginine 221. Positions 259 to 263 (RLSKS) match the 'KMSKS' region motif. Lysine 262 contacts ATP.

This sequence belongs to the class-I aminoacyl-tRNA synthetase family. GluQ subfamily. Zn(2+) serves as cofactor.

Catalyzes the tRNA-independent activation of glutamate in presence of ATP and the subsequent transfer of glutamate onto a tRNA(Asp). Glutamate is transferred on the 2-amino-5-(4,5-dihydroxy-2-cyclopenten-1-yl) moiety of the queuosine in the wobble position of the QUC anticodon. In Cutibacterium acnes (strain DSM 16379 / KPA171202) (Propionibacterium acnes), this protein is Glutamyl-Q tRNA(Asp) synthetase.